An 87-amino-acid polypeptide reads, in one-letter code: Small ribosomal subunit protein uS15 (87 aa).

It belongs to the universal ribosomal protein uS15 family. Part of the 30S ribosomal subunit. Forms a bridge to the 50S subunit in the 70S ribosome, contacting the 23S rRNA.

One of the primary rRNA binding proteins, it binds directly to 16S rRNA where it helps nucleate assembly of the platform of the 30S subunit by binding and bridging several RNA helices of the 16S rRNA. Functionally, forms an intersubunit bridge (bridge B4) with the 23S rRNA of the 50S subunit in the ribosome. The protein is Small ribosomal subunit protein uS15 of Cutibacterium acnes (strain DSM 16379 / KPA171202) (Propionibacterium acnes).